Here is a 386-residue protein sequence, read N- to C-terminus: Protein-glutamate methylesterase/protein-glutamine glutaminase (386 aa).

The Response regulatory domain maps to 4–121 (KVLVVDDSAF…ARNRDEAVKT (118 aa)). 4-aspartylphosphate is present on Asp-55. Residues 133-161 (PVSRTSARASTPPPVAKQPERSSEPTTAL) form a disordered region. The region spanning 190–384 (INRAYQLLAI…KAIMKEVGYS (195 aa)) is the CheB-type methylesterase domain. Catalysis depends on residues Ser-202, His-229, and Asp-326.

It belongs to the CheB family. In terms of processing, phosphorylated by CheA. Phosphorylation of the N-terminal regulatory domain activates the methylesterase activity.

The protein resides in the cytoplasm. The catalysed reaction is [protein]-L-glutamate 5-O-methyl ester + H2O = L-glutamyl-[protein] + methanol + H(+). It catalyses the reaction L-glutaminyl-[protein] + H2O = L-glutamyl-[protein] + NH4(+). Functionally, involved in chemotaxis. Part of a chemotaxis signal transduction system that modulates chemotaxis in response to various stimuli. Catalyzes the demethylation of specific methylglutamate residues introduced into the chemoreceptors (methyl-accepting chemotaxis proteins or MCP) by CheR. Also mediates the irreversible deamidation of specific glutamine residues to glutamic acid. In Idiomarina loihiensis (strain ATCC BAA-735 / DSM 15497 / L2-TR), this protein is Protein-glutamate methylesterase/protein-glutamine glutaminase.